A 436-amino-acid chain; its full sequence is 3-ketoacyl-CoA thiolase (436 aa).

The active-site Acyl-thioester intermediate is the C99. Active-site proton acceptor residues include H392 and C422.

The protein belongs to the thiolase-like superfamily. Thiolase family. In terms of assembly, heterotetramer of two alpha chains (FadJ) and two beta chains (FadI).

It is found in the cytoplasm. The enzyme catalyses an acyl-CoA + acetyl-CoA = a 3-oxoacyl-CoA + CoA. The protein operates within lipid metabolism; fatty acid beta-oxidation. Its function is as follows. Catalyzes the final step of fatty acid oxidation in which acetyl-CoA is released and the CoA ester of a fatty acid two carbons shorter is formed. The polypeptide is 3-ketoacyl-CoA thiolase (Serratia proteamaculans (strain 568)).